A 98-amino-acid chain; its full sequence is NADH-ubiquinone oxidoreductase chain 4L (98 aa).

The next 3 membrane-spanning stretches (helical) occupy residues methionine 1–threonine 21, valine 27–isoleucine 47, and isoleucine 61–isoleucine 81.

This sequence belongs to the complex I subunit 4L family. As to quaternary structure, core subunit of respiratory chain NADH dehydrogenase (Complex I) which is composed of 45 different subunits.

It is found in the mitochondrion inner membrane. It catalyses the reaction a ubiquinone + NADH + 5 H(+)(in) = a ubiquinol + NAD(+) + 4 H(+)(out). Core subunit of the mitochondrial membrane respiratory chain NADH dehydrogenase (Complex I) which catalyzes electron transfer from NADH through the respiratory chain, using ubiquinone as an electron acceptor. Part of the enzyme membrane arm which is embedded in the lipid bilayer and involved in proton translocation. In Macaca nigra (Celebes black macaque), this protein is NADH-ubiquinone oxidoreductase chain 4L (MT-ND4L).